Here is a 357-residue protein sequence, read N- to C-terminus: Putative RING-H2 finger protein ATL37 (357 aa).

A signal peptide spans 1 to 31; the sequence is MTIFTRDFSHRILACVLLPLFLFQCLPYVTC. A helical membrane pass occupies residues 47–67; it reads SSIIGIVLLSLFLLLLVVYCL. The RING-type; atypical zinc-finger motif lies at 120–162; it reads CAICLCEFEDEEPLRWMPPCSHTFHANCIDEWLSSRSTCPVCR. Positions 172 to 210 are disordered; sequence SFPHPSMDVETGNAQRGVQESPDERSLTGSSVTCNNNAN. Positions 198-210 are enriched in polar residues; sequence LTGSSVTCNNNAN. Residue serine 273 is modified to Phosphoserine. Disordered regions lie at residues 281-304 and 327-357; these read RSSR…QGRQ and LDRD…PEKN. Residues 283 to 304 are compositionally biased toward polar residues; that stretch reads SRQGYRSGSVGNERTGFSQGRQ. Over residues 340-357 the composition is skewed to basic and acidic residues; the sequence is NDKDFGERSFQRLMPEKN.

This sequence belongs to the RING-type zinc finger family. ATL subfamily.

It localises to the membrane. The catalysed reaction is S-ubiquitinyl-[E2 ubiquitin-conjugating enzyme]-L-cysteine + [acceptor protein]-L-lysine = [E2 ubiquitin-conjugating enzyme]-L-cysteine + N(6)-ubiquitinyl-[acceptor protein]-L-lysine.. Its pathway is protein modification; protein ubiquitination. The polypeptide is Putative RING-H2 finger protein ATL37 (ATL37) (Arabidopsis thaliana (Mouse-ear cress)).